We begin with the raw amino-acid sequence, 241 residues long: Methylthioribulose-1-phosphate dehydratase (241 aa).

Position 100 (Cys-100) interacts with substrate. His-117 and His-119 together coordinate Zn(2+). Residue Glu-146 is the Proton donor/acceptor of the active site. His-202 contributes to the Zn(2+) binding site.

Belongs to the aldolase class II family. MtnB subfamily. The cofactor is Zn(2+).

Its subcellular location is the cytoplasm. It carries out the reaction 5-(methylsulfanyl)-D-ribulose 1-phosphate = 5-methylsulfanyl-2,3-dioxopentyl phosphate + H2O. Its pathway is amino-acid biosynthesis; L-methionine biosynthesis via salvage pathway; L-methionine from S-methyl-5-thio-alpha-D-ribose 1-phosphate: step 2/6. Catalyzes the dehydration of methylthioribulose-1-phosphate (MTRu-1-P) into 2,3-diketo-5-methylthiopentyl-1-phosphate (DK-MTP-1-P). The polypeptide is Methylthioribulose-1-phosphate dehydratase (Ajellomyces dermatitidis (strain ER-3 / ATCC MYA-2586) (Blastomyces dermatitidis)).